The primary structure comprises 201 residues: Putative manganese efflux pump MntP 2 (201 aa).

6 consecutive transmembrane segments (helical) span residues 3-23, 39-59, 65-85, 116-136, 141-161, and 176-196; these read LISVILISIGLSMDAFAVSIT, IGLFFGGFQALMPLIGWSIGI, IAALDHWIALILLSIIGGKMI, LILLAIATSIDALAVGVSFAF, IINTIIIIGSITFVICFIGVM, and ILGGVVLILIGVKIFIQHTNI.

Belongs to the MntP (TC 9.B.29) family.

It localises to the cell membrane. In terms of biological role, probably functions as a manganese efflux pump. This Clostridium botulinum (strain Hall / ATCC 3502 / NCTC 13319 / Type A) protein is Putative manganese efflux pump MntP 2.